Here is a 384-residue protein sequence, read N- to C-terminus: S-adenosylmethionine synthase (384 aa).

Histidine 15 is a binding site for ATP. Position 17 (aspartate 17) interacts with Mg(2+). A K(+)-binding site is contributed by glutamate 43. L-methionine is bound by residues glutamate 56 and glutamine 99. Residues 99 to 109 are flexible loop; the sequence is QSPDINQGVDR. ATP contacts are provided by residues 164–166, 230–231, aspartate 239, 245–246, alanine 262, and lysine 266; these read DAK, RF, and RK. Position 239 (aspartate 239) interacts with L-methionine. Lysine 270 provides a ligand contact to L-methionine.

This sequence belongs to the AdoMet synthase family. Homotetramer; dimer of dimers. The cofactor is Mg(2+). Requires K(+) as cofactor.

Its subcellular location is the cytoplasm. The enzyme catalyses L-methionine + ATP + H2O = S-adenosyl-L-methionine + phosphate + diphosphate. It participates in amino-acid biosynthesis; S-adenosyl-L-methionine biosynthesis; S-adenosyl-L-methionine from L-methionine: step 1/1. Its function is as follows. Catalyzes the formation of S-adenosylmethionine (AdoMet) from methionine and ATP. The overall synthetic reaction is composed of two sequential steps, AdoMet formation and the subsequent tripolyphosphate hydrolysis which occurs prior to release of AdoMet from the enzyme. The polypeptide is S-adenosylmethionine synthase (Yersinia enterocolitica serotype O:8 / biotype 1B (strain NCTC 13174 / 8081)).